Reading from the N-terminus, the 62-residue chain is Alpha-conotoxin-like S1.1 (62 aa).

An N-terminal signal peptide occupies residues 1–21 (MGMRMMFTVFLLVVLAITVVS). Residues 22–48 (FPLDRESDGANAEARTHDHEKHALDRN) constitute a propeptide that is removed on maturation. 2 disulfide bridges follow: Cys-50/Cys-56 and Cys-51/Cys-61. The residue at position 61 (Cys-61) is a Cysteine amide.

It belongs to the conotoxin A superfamily. As to expression, expressed by the venom duct.

It is found in the secreted. Alpha-conotoxins act on postsynaptic membranes, they bind to the nicotinic acetylcholine receptors (nAChR) and thus inhibit them. The polypeptide is Alpha-conotoxin-like S1.1 (Conus striatus (Striated cone)).